A 69-amino-acid polypeptide reads, in one-letter code: Consomatin Be1 (69 aa).

The first 22 residues, 1 to 22 (MEMAYWVMVMMMVWITAPLSEG), serve as a signal peptide directing secretion. Positions 23 to 57 (GKLNDVIRALAPDDVTPQFILRSLISRRRSDSDVR) are excised as a propeptide. The residue at position 58 (glutamate 58) is a 4-carboxyglutamate. Cysteine 62 and cysteine 67 are disulfide-bonded. The residue at position 64 (tryptophan 64) is a D-tryptophan. 4-hydroxyproline occurs at positions 68 and 69.

It belongs to the conotoxin C superfamily. Consomatin family. As to expression, expressed by the venom duct.

The protein localises to the secreted. Its function is as follows. Moderately activates human somatostatin receptors (SSTR) with a preferential activation of SSTR1 and SSTR4. In vivo, does not cause behavioral changes in mice within a few minutes of intracranial injection, but causes a progressive loss of movement thereafter. Four to five hours after injection, mice recover, even with the highest dose tested. Shows antinociception and antihyperalgesia activities in two mouse models of acute pain, most probably by acting outside the central nervous system. This Conus betulinus (Beech cone) protein is Consomatin Be1.